A 145-amino-acid polypeptide reads, in one-letter code: MNVMNITDIKKYIPHRYPFLLIDRVIKIEKDKSLVAIKNVTVNEPFFTGHFPVRPVMPGVLIIESLAQAAGILIVKSLNLPEGHKDIYFFAGVDNARFKRVVEPGDQLTLEVKVLKVHRGLWKFEGKATVDDQLACKAELMTIKG.

H50 is an active-site residue.

This sequence belongs to the thioester dehydratase family. FabZ subfamily.

The protein resides in the cytoplasm. It catalyses the reaction a (3R)-hydroxyacyl-[ACP] = a (2E)-enoyl-[ACP] + H2O. Functionally, involved in unsaturated fatty acids biosynthesis. Catalyzes the dehydration of short chain beta-hydroxyacyl-ACPs and long chain saturated and unsaturated beta-hydroxyacyl-ACPs. In Coxiella burnetii (strain CbuK_Q154) (Coxiella burnetii (strain Q154)), this protein is 3-hydroxyacyl-[acyl-carrier-protein] dehydratase FabZ.